A 134-amino-acid polypeptide reads, in one-letter code: TSC22 domain family protein 3 (134 aa).

Positions 1 to 60 (MNTEMYQTPMEVAVYQLHNFSISFFSSLLGGDVVSVKLDNSASGASVVALDNKIEQAMDL) are AP1-binding. Positions 76–97 (LKEQIRELVEKNSQLERENTLL) are leucine-zipper. Residues 101–134 (ASPEQLEKFQSRLSPEEPAPEAPETPEAPGGSAV) form a disordered region. A Phosphoserine modification is found at Ser102. The residue at position 125 (Thr125) is a Phosphothreonine. A compositionally biased stretch (low complexity) spans 125–134 (TPEAPGGSAV).

It belongs to the TSC-22/Dip/Bun family. As to quaternary structure, can form homodimers, however it is likely to function as a monomer. Interacts with NFKB1. Interacts (via N-terminus) with JUN and FOS; these interactions inhibit the binding of active AP1 to its target DNA. Interacts with MYOD1. Interacts with HDAC1; this interaction affects HDAC1 activity on MYOG promoter and thus inhibits MYOD1 transcriptional activity.

The protein resides in the cytoplasm. The protein localises to the nucleus. Its function is as follows. Protects T-cells from IL2 deprivation-induced apoptosis through the inhibition of FOXO3A transcriptional activity that leads to the down-regulation of the pro-apoptotic factor BCL2L11. In macrophages, plays a role in the anti-inflammatory and immunosuppressive effects of glucocorticoids and IL10. In T-cells, inhibits anti-CD3-induced NFKB1 nuclear translocation and thereby NFKB1 DNA-binding activities. In vitro, suppresses AP-1 transcription factor complex DNA-binding activities. In Rattus norvegicus (Rat), this protein is TSC22 domain family protein 3 (Tsc22d3).